A 160-amino-acid chain; its full sequence is MRILVQRVTEASVNVDGRQVAAIGPGIMALVGFGQEDGPDFHNRPAFRGMAQKLAGLRIFPGQGELANKFHTSLEEFGGQLLLVPQFTLYADCRKGRRPSFTDAGNPAWAEPMFEHFVKIVDESCSVSVSSGIFGADMAVRLCNWGPVTIWLDSLSLFGS.

Residues 146 to 147 carry the Gly-cisPro motif, important for rejection of L-amino acids motif; it reads GP.

Belongs to the DTD family. Homodimer.

The protein localises to the cytoplasm. It carries out the reaction glycyl-tRNA(Ala) + H2O = tRNA(Ala) + glycine + H(+). The catalysed reaction is a D-aminoacyl-tRNA + H2O = a tRNA + a D-alpha-amino acid + H(+). In terms of biological role, an aminoacyl-tRNA editing enzyme that deacylates mischarged D-aminoacyl-tRNAs. Also deacylates mischarged glycyl-tRNA(Ala), protecting cells against glycine mischarging by AlaRS. Acts via tRNA-based rather than protein-based catalysis; rejects L-amino acids rather than detecting D-amino acids in the active site. By recycling D-aminoacyl-tRNA to D-amino acids and free tRNA molecules, this enzyme counteracts the toxicity associated with the formation of D-aminoacyl-tRNA entities in vivo and helps enforce protein L-homochirality. The protein is D-aminoacyl-tRNA deacylase of Desulfovibrio desulfuricans (strain ATCC 27774 / DSM 6949 / MB).